The following is a 150-amino-acid chain: Myeloid-derived growth factor homolog (150 aa).

The N-terminal stretch at 1–22 (MTFLKYLLILCTIFLMVTNSLS) is a signal peptide.

It belongs to the MYDGF family.

It localises to the secreted. In Dictyostelium discoideum (Social amoeba), this protein is Myeloid-derived growth factor homolog.